We begin with the raw amino-acid sequence, 666 residues long: Neurexin-2-beta (666 aa).

Gly residues predominate over residues 1-10 (MPPGGSGPGG). The interval 1-30 (MPPGGSGPGGCPRRPPALAGPLPPPPPPPP) is disordered. The first 50 residues, 1 to 50 (MPPGGSGPGGCPRRPPALAGPLPPPPPPPPPPLLPLLPLLLLLLLGAAEG), serve as a signal peptide directing secretion. Pro residues predominate over residues 21–30 (PLPPPPPPPP). Over 51–590 (ARVSSSLSTT…EVIRESSSTT (540 aa)) the chain is Extracellular. The Laminin G-like domain occupies 91–299 (TTYIFGKGGA…HLRLVGEGPS (209 aa)). Ca(2+) contacts are provided by aspartate 143 and valine 160. Asparagine 190 carries N-linked (GlcNAc...) asparagine glycosylation. 2 residues coordinate Ca(2+): isoleucine 242 and asparagine 244. Residues 327 to 346 (ATTTTRRGRSPTLRDSTTQN) are disordered. A glycan (O-linked (Xyl...) (heparan sulfate) serine) is linked at serine 354. Disordered stretches follow at residues 412-443 (ATQDTLPPPAARRPPSGGPCQAERDDSDCEEP) and 479-580 (TLLS…PGAV). Residues 591 to 611 (GMVVGIVAAAALCILILLYAM) form a helical membrane-spanning segment. At 612–666 (YKYRNRDEGSYQVDQSRNYISNSAQSNGAVVKEKAPAAPKTPSKAKKNKDKEYYV) the chain is on the cytoplasmic side. The interval 633–666 (NSAQSNGAVVKEKAPAAPKTPSKAKKNKDKEYYV) is disordered.

This sequence belongs to the neurexin family. As to quaternary structure, interacts (via cytoplasmic C-terminal region) with CASK. Specific isoforms bind alpha-dystroglycan and neuroligins NLGN1, NLGN2 and NLGN3. Interacts with CBLN1, CBLN2 and, less avidly, with CBLN4. Interacts with CLSTN3. In terms of processing, O-glycosylated; contains heparan sulfate. Heparan sulfate attachment is required for synapse development by mediating interactions with neuroligins.

Its subcellular location is the presynaptic cell membrane. In terms of biological role, neuronal cell surface protein that may be involved in cell recognition and cell adhesion. This chain is Neurexin-2-beta (NRXN2), found in Homo sapiens (Human).